The sequence spans 373 residues: Glutamate 5-kinase (373 aa).

An ATP-binding site is contributed by K15. Positions 55, 142, and 154 each coordinate substrate. ATP is bound by residues T174 to D175 and T216 to K222. Residues A281–R359 enclose the PUA domain.

It belongs to the glutamate 5-kinase family.

The protein resides in the cytoplasm. It carries out the reaction L-glutamate + ATP = L-glutamyl 5-phosphate + ADP. Its pathway is amino-acid biosynthesis; L-proline biosynthesis; L-glutamate 5-semialdehyde from L-glutamate: step 1/2. Functionally, catalyzes the transfer of a phosphate group to glutamate to form L-glutamate 5-phosphate. The sequence is that of Glutamate 5-kinase from Geobacter sp. (strain M21).